The sequence spans 719 residues: Exonuclease mut-7 homolog (719 aa).

Residues 1 to 22 (MSKSNNVAPPCRQDQLGFVPAG) form a disordered region. The 3'-5' exonuclease domain maps to 575 to 629 (NLANLVRLCLGKKLDKSNQFSNWAQRPLRKEQLRYAALDAFCLLEIYDAIEKQLT). Positions 644–719 (NDVRPPSDSG…FEGPNTKSVL (76 aa)) are disordered. The segment covering 667–678 (RRNHRDKYNKRH) has biased composition (basic residues). Polar residues-rich tracts occupy residues 683-692 (DSNSGNSSRA) and 706-719 (EQQTFEGPNTKSVL).

This sequence belongs to the mut-7 family. Mg(2+) is required as a cofactor.

In terms of biological role, possesses 3'-5' exoribonuclease activity. Required for 3'-end trimming of AGO1-bound miRNAs. This Aedes aegypti (Yellowfever mosquito) protein is Exonuclease mut-7 homolog.